The chain runs to 141 residues: Large ribosomal subunit protein uL11 (141 aa).

This sequence belongs to the universal ribosomal protein uL11 family. Part of the ribosomal stalk of the 50S ribosomal subunit. Interacts with L10 and the large rRNA to form the base of the stalk. L10 forms an elongated spine to which L12 dimers bind in a sequential fashion forming a multimeric L10(L12)X complex. One or more lysine residues are methylated.

Forms part of the ribosomal stalk which helps the ribosome interact with GTP-bound translation factors. This Synechococcus sp. (strain WH7803) protein is Large ribosomal subunit protein uL11.